Here is a 333-residue protein sequence, read N- to C-terminus: Ribosomal protein L11 methyltransferase (333 aa).

Residues threonine 160, glycine 181, aspartate 203, and asparagine 267 each contribute to the S-adenosyl-L-methionine site.

This sequence belongs to the methyltransferase superfamily. PrmA family.

The protein resides in the cytoplasm. It catalyses the reaction L-lysyl-[protein] + 3 S-adenosyl-L-methionine = N(6),N(6),N(6)-trimethyl-L-lysyl-[protein] + 3 S-adenosyl-L-homocysteine + 3 H(+). In terms of biological role, methylates ribosomal protein L11. The protein is Ribosomal protein L11 methyltransferase of Lachnoclostridium phytofermentans (strain ATCC 700394 / DSM 18823 / ISDg) (Clostridium phytofermentans).